A 24-amino-acid chain; its full sequence is Brevinin-1GRa (24 aa).

As to expression, expressed by the skin glands.

It localises to the secreted. In terms of biological role, antimicrobial peptide active against the Gram-positive bacterium S.aureus (MIC=12.5 uM) and against the Gram-negative bacteria E.coli (MIC=25 uM). The chain is Brevinin-1GRa from Odorrana grahami (Yunnanfu frog).